We begin with the raw amino-acid sequence, 314 residues long: Ribonuclease Z (314 aa).

The Zn(2+) site is built by histidine 61, histidine 63, aspartate 65, histidine 66, histidine 139, aspartate 211, and histidine 269. Aspartate 65 functions as the Proton acceptor in the catalytic mechanism.

It belongs to the RNase Z family. In terms of assembly, homodimer. Zn(2+) is required as a cofactor.

The enzyme catalyses Endonucleolytic cleavage of RNA, removing extra 3' nucleotides from tRNA precursor, generating 3' termini of tRNAs. A 3'-hydroxy group is left at the tRNA terminus and a 5'-phosphoryl group is left at the trailer molecule.. Zinc phosphodiesterase, which displays some tRNA 3'-processing endonuclease activity. Probably involved in tRNA maturation, by removing a 3'-trailer from precursor tRNA. This Gemmatimonas aurantiaca (strain DSM 14586 / JCM 11422 / NBRC 100505 / T-27) protein is Ribonuclease Z.